The chain runs to 458 residues: Light-independent protochlorophyllide reductase subunit N (458 aa).

[4Fe-4S] cluster contacts are provided by C20, C45, and C105.

The protein belongs to the BchN/ChlN family. As to quaternary structure, protochlorophyllide reductase is composed of three subunits; ChlL, ChlN and ChlB. Forms a heterotetramer of two ChlB and two ChlN subunits. Requires [4Fe-4S] cluster as cofactor.

It is found in the plastid. Its subcellular location is the chloroplast. It carries out the reaction chlorophyllide a + oxidized 2[4Fe-4S]-[ferredoxin] + 2 ADP + 2 phosphate = protochlorophyllide a + reduced 2[4Fe-4S]-[ferredoxin] + 2 ATP + 2 H2O. The protein operates within porphyrin-containing compound metabolism; chlorophyll biosynthesis (light-independent). Functionally, component of the dark-operative protochlorophyllide reductase (DPOR) that uses Mg-ATP and reduced ferredoxin to reduce ring D of protochlorophyllide (Pchlide) to form chlorophyllide a (Chlide). This reaction is light-independent. The NB-protein (ChlN-ChlB) is the catalytic component of the complex. This is Light-independent protochlorophyllide reductase subunit N from Angiopteris evecta (Mule's foot fern).